We begin with the raw amino-acid sequence, 93 residues long: Phosphoribosyl-ATP pyrophosphatase (93 aa).

The protein belongs to the PRA-PH family.

Its subcellular location is the cytoplasm. The enzyme catalyses 1-(5-phospho-beta-D-ribosyl)-ATP + H2O = 1-(5-phospho-beta-D-ribosyl)-5'-AMP + diphosphate + H(+). Its pathway is amino-acid biosynthesis; L-histidine biosynthesis; L-histidine from 5-phospho-alpha-D-ribose 1-diphosphate: step 2/9. This Mycolicibacterium smegmatis (strain ATCC 700084 / mc(2)155) (Mycobacterium smegmatis) protein is Phosphoribosyl-ATP pyrophosphatase.